A 197-amino-acid polypeptide reads, in one-letter code: Casparian strip membrane protein 4 (197 aa).

At 1-34 (MMSSTTIDVPAESSNVAKGKAVLVAAPRPGGWKK) the chain is on the cytoplasmic side. Residues 35 to 55 (GIAIVDFVLRLGAVAAALGAA) form a helical membrane-spanning segment. Residues 56-85 (TTMATADQTLPFFTQFFQFEASYDSFTTFQ) are Extracellular-facing. A helical membrane pass occupies residues 86-106 (FFVITMALVGCYLVLSLPLSI). Over 107–118 (VSIIRPHALGPK) the chain is Cytoplasmic. A helical transmembrane segment spans residues 119-139 (LFLIILDTVFLTLATASAASA). Topologically, residues 140–171 (AAVVYVAHNGNQDSNWLAICNQFGDFCAQTSG) are extracellular. The helical transmembrane segment at 172 to 192 (AVVSSLVAVVVFVLLIVMSAL) threads the bilayer. Residues 193-197 (ALGKH) lie on the Cytoplasmic side of the membrane.

It belongs to the Casparian strip membrane proteins (CASP) family. In terms of assembly, homodimer and heterodimers.

The protein localises to the cell membrane. Functionally, regulates membrane-cell wall junctions and localized cell wall deposition. Required for establishment of the Casparian strip membrane domain (CSD) and the subsequent formation of Casparian strips, a cell wall modification of the root endodermis that determines an apoplastic barrier between the intraorganismal apoplasm and the extraorganismal apoplasm and prevents lateral diffusion. The chain is Casparian strip membrane protein 4 from Lotus japonicus (Lotus corniculatus var. japonicus).